Here is a 379-residue protein sequence, read N- to C-terminus: Queuine tRNA-ribosyltransferase (379 aa).

Asp-94 acts as the Proton acceptor in catalysis. Residues Asp-94–Phe-98, Asp-148, Gln-191, and Gly-218 each bind substrate. An RNA binding region spans residues Gly-249 to Ala-255. The Nucleophile role is filled by Asp-268. The interval Thr-273–Arg-277 is RNA binding; important for wobble base 34 recognition. Residues Cys-306, Cys-308, Cys-311, and His-337 each contribute to the Zn(2+) site.

It belongs to the queuine tRNA-ribosyltransferase family. As to quaternary structure, homodimer. Within each dimer, one monomer is responsible for RNA recognition and catalysis, while the other monomer binds to the replacement base PreQ1. It depends on Zn(2+) as a cofactor.

The enzyme catalyses 7-aminomethyl-7-carbaguanine + guanosine(34) in tRNA = 7-aminomethyl-7-carbaguanosine(34) in tRNA + guanine. The protein operates within tRNA modification; tRNA-queuosine biosynthesis. In terms of biological role, catalyzes the base-exchange of a guanine (G) residue with the queuine precursor 7-aminomethyl-7-deazaguanine (PreQ1) at position 34 (anticodon wobble position) in tRNAs with GU(N) anticodons (tRNA-Asp, -Asn, -His and -Tyr). Catalysis occurs through a double-displacement mechanism. The nucleophile active site attacks the C1' of nucleotide 34 to detach the guanine base from the RNA, forming a covalent enzyme-RNA intermediate. The proton acceptor active site deprotonates the incoming PreQ1, allowing a nucleophilic attack on the C1' of the ribose to form the product. After dissociation, two additional enzymatic reactions on the tRNA convert PreQ1 to queuine (Q), resulting in the hypermodified nucleoside queuosine (7-(((4,5-cis-dihydroxy-2-cyclopenten-1-yl)amino)methyl)-7-deazaguanosine). The polypeptide is Queuine tRNA-ribosyltransferase (Oceanobacillus iheyensis (strain DSM 14371 / CIP 107618 / JCM 11309 / KCTC 3954 / HTE831)).